We begin with the raw amino-acid sequence, 108 residues long: Class I hydrophobin hgfII (108 aa).

An N-terminal signal peptide occupies residues 1–19 (MFSRIAAVSFLALPLLAAA). Intrachain disulfides connect Cys-28–Cys-89, Cys-35–Cys-83, Cys-36–Cys-69, and Cys-90–Cys-103. Asn-92 carries N-linked (GlcNAc...) asparagine glycosylation.

Belongs to the fungal hydrophobin family. In terms of assembly, self-assembles to form functional amyloid fibrils called rodlets with a diameter of 15-30 nm. Self-assembly into fibrillar rodlets occurs spontaneously at hydrophobic:hydrophilic interfaces and the rodlets further associate laterally to form amphipathic monolayers. As to expression, highky expressed in hyphae cultured in liquid medium.

The protein localises to the secreted. Its subcellular location is the cell wall. In terms of biological role, aerial growth, conidiation, and dispersal of filamentous fungi in the environment rely upon a capability of their secreting small amphipathic proteins called hydrophobins (HPBs) with low sequence identity. Class I can self-assemble into an outermost layer of rodlet bundles on aerial cell surfaces, conferring cellular hydrophobicity that supports fungal growth, development and dispersal; whereas Class II form highly ordered films at water-air interfaces through intermolecular interactions but contribute nothing to the rodlet structure. HgfII is a class I hydrophobin that is involved in cell surface hydrophobicity and might play a key role during the growth and development of hyphae cultured in liquid medium. The polypeptide is Class I hydrophobin hgfII (Grifola frondosa (Maitake)).